Reading from the N-terminus, the 902-residue chain is Transcription factor E2F7 (902 aa).

Ser-96 is modified (phosphoserine). Residues 143–212 (RKQKSLGLLC…VAKNQYGWHG (70 aa)) mediate DNA binding. Residues 253 to 269 (ERRKDGSPDPRDQHLLD) show a composition bias toward basic and acidic residues. The disordered stretch occupies residues 253-283 (ERRKDGSPDPRDQHLLDFSESDYPSSSANSR). A DNA-binding region spans residues 283 to 368 (RKDKSLRIMS…GRKPAFKWIG (86 aa)). The residue at position 411 (Ser-411) is a Phosphoserine. 3 disordered regions span residues 418 to 439 (SEKI…KQGP), 589 to 627 (LCEE…SNST), and 665 to 690 (NGFI…DNEI). Composition is skewed to basic and acidic residues over residues 589 to 611 (LCEE…REFE) and 679 to 690 (PDTEKSSNDNEI). Phosphoserine is present on Ser-832. Residues 844 to 902 (KAEQSPAPATPKSIQRRHRETFFKTPGSLGDPAFRRERNQSRNTSSAQRRLEISSSGPD) form a disordered region. Residues 884–902 (SRNTSSAQRRLEISSSGPD) are compositionally biased toward polar residues.

It belongs to the E2F/DP family. Homodimer and heterodimer: mainly forms homodimers and, to a lesser extent, heterodimers with E2F8. Dimerization is important for DNA-binding. Interacts with HIF1A. Interacts with MN1.

It localises to the nucleus. Its function is as follows. Atypical E2F transcription factor that participates in various processes such as angiogenesis, polyploidization of specialized cells and DNA damage response. Mainly acts as a transcription repressor that binds DNA independently of DP proteins and specifically recognizes the E2 recognition site 5'-TTTC[CG]CGC-3'. Directly represses transcription of classical E2F transcription factors such as E2F1. Acts as a regulator of S-phase by recognizing and binding the E2-related site 5'-TTCCCGCC-3' and mediating repression of G1/S-regulated genes. Plays a key role in polyploidization of cells in placenta and liver by regulating the endocycle, probably by repressing genes promoting cytokinesis and antagonizing action of classical E2F proteins (E2F1, E2F2 and/or E2F3). Required for placental development by promoting polyploidization of trophoblast giant cells. Also involved in DNA damage response: up-regulated by p53/TP53 following genotoxic stress and acts as a downstream effector of p53/TP53-dependent repression by mediating repression of indirect p53/TP53 target genes involved in DNA replication. Acts as a promoter of sprouting angiogenesis, possibly by acting as a transcription activator: associates with HIF1A, recognizes and binds the VEGFA promoter, which is different from canonical E2 recognition site, and activates expression of the VEGFA gene. Acts as a negative regulator of keratinocyte differentiation. In Rattus norvegicus (Rat), this protein is Transcription factor E2F7 (E2f7).